The following is a 374-amino-acid chain: N-acetyldiaminopimelate deacetylase (374 aa).

Asp69 is an active-site residue. The active-site Proton acceptor is Glu128.

Belongs to the peptidase M20A family. N-acetyldiaminopimelate deacetylase subfamily.

It carries out the reaction N-acetyl-(2S,6S)-2,6-diaminopimelate + H2O = (2S,6S)-2,6-diaminopimelate + acetate. Its pathway is amino-acid biosynthesis; L-lysine biosynthesis via DAP pathway; LL-2,6-diaminopimelate from (S)-tetrahydrodipicolinate (acetylase route): step 3/3. Catalyzes the conversion of N-acetyl-diaminopimelate to diaminopimelate and acetate. This chain is N-acetyldiaminopimelate deacetylase, found in Bacillus licheniformis (strain ATCC 14580 / DSM 13 / JCM 2505 / CCUG 7422 / NBRC 12200 / NCIMB 9375 / NCTC 10341 / NRRL NRS-1264 / Gibson 46).